Consider the following 149-residue polypeptide: Pleckstrin homology domain-containing family J member 1 (149 aa).

Positions 15 to 108 (RAEKAAELGM…WVEALTNASY (94 aa)) constitute a PH domain.

This Xenopus laevis (African clawed frog) protein is Pleckstrin homology domain-containing family J member 1 (plekhj1).